Here is an 800-residue protein sequence, read N- to C-terminus: DNA topoisomerase 4 subunit A (800 aa).

A Topo IIA-type catalytic domain is found at 31–495 (LPDVRDGLKP…EIEEIKIDKE (465 aa)). Residue Tyr119 is the O-(5'-phospho-DNA)-tyrosine intermediate of the active site.

It belongs to the type II topoisomerase GyrA/ParC subunit family. ParC type 2 subfamily. In terms of assembly, heterotetramer composed of ParC and ParE.

Its subcellular location is the cell membrane. It catalyses the reaction ATP-dependent breakage, passage and rejoining of double-stranded DNA.. In terms of biological role, topoisomerase IV is essential for chromosome segregation. It relaxes supercoiled DNA. Performs the decatenation events required during the replication of a circular DNA molecule. This chain is DNA topoisomerase 4 subunit A, found in Staphylococcus aureus (strain NCTC 8325 / PS 47).